Here is a 47-residue protein sequence, read N- to C-terminus: uncharacterized protein (47 aa).

Residues 1–18 (MKKWLLIIAGALIISACA) form the signal peptide. The segment at 28–47 (EGSHSGVKFDKDSRQWGLNQ) is disordered.

This is an uncharacterized protein from Haemophilus influenzae (strain ATCC 51907 / DSM 11121 / KW20 / Rd).